Consider the following 206-residue polypeptide: Protein DEHYDRATION-INDUCED 19 (206 aa).

Phosphothreonine is present on Thr-105. Phosphoserine is present on Ser-107. The interval 142 to 167 (SSFISPTRSQSSPAPRQTKNVSEDKQ) is disordered. The span at 143-161 (SFISPTRSQSSPAPRQTKN) shows a compositional bias: polar residues.

It belongs to the Di19 family. As to quaternary structure, interacts with ADO2/LKP2, CPK11 and CPK4. Weak interaction with CPK12 and no interactions with CPK1, CPK5 or CPK26. In terms of processing, phosphorylated within the NLS/NES region. Expressed in seedlings, roots, leaves, stems, flowers and siliques.

Its subcellular location is the nucleus. The polypeptide is Protein DEHYDRATION-INDUCED 19 (DI19-1) (Arabidopsis thaliana (Mouse-ear cress)).